A 72-amino-acid polypeptide reads, in one-letter code: Translation initiation factor IF-1 (72 aa).

Positions 1–72 constitute an S1-like domain; sequence MAKSDVIEVD…DKGRITYRYK (72 aa).

This sequence belongs to the IF-1 family. Component of the 30S ribosomal translation pre-initiation complex which assembles on the 30S ribosome in the order IF-2 and IF-3, IF-1 and N-formylmethionyl-tRNA(fMet); mRNA recruitment can occur at any time during PIC assembly.

Its subcellular location is the cytoplasm. In terms of biological role, one of the essential components for the initiation of protein synthesis. Stabilizes the binding of IF-2 and IF-3 on the 30S subunit to which N-formylmethionyl-tRNA(fMet) subsequently binds. Helps modulate mRNA selection, yielding the 30S pre-initiation complex (PIC). Upon addition of the 50S ribosomal subunit IF-1, IF-2 and IF-3 are released leaving the mature 70S translation initiation complex. The chain is Translation initiation factor IF-1 from Sulfurimonas denitrificans (strain ATCC 33889 / DSM 1251) (Thiomicrospira denitrificans (strain ATCC 33889 / DSM 1251)).